A 412-amino-acid polypeptide reads, in one-letter code: ATP phosphoribosyltransferase regulatory subunit (412 aa).

Belongs to the class-II aminoacyl-tRNA synthetase family. HisZ subfamily. As to quaternary structure, heteromultimer composed of HisG and HisZ subunits.

Its subcellular location is the cytoplasm. Its pathway is amino-acid biosynthesis; L-histidine biosynthesis; L-histidine from 5-phospho-alpha-D-ribose 1-diphosphate: step 1/9. Functionally, required for the first step of histidine biosynthesis. May allow the feedback regulation of ATP phosphoribosyltransferase activity by histidine. The chain is ATP phosphoribosyltransferase regulatory subunit from Dehalococcoides mccartyi (strain CBDB1).